A 226-amino-acid chain; its full sequence is ATP synthase subunit a (226 aa).

Helical transmembrane passes span 22–42 (SMNW…FWLI), 73–93 (IIIF…SLIP), 102–122 (LLLN…YLIY), 135–155 (LNSP…SLII), 173–193 (LILT…PINL), and 202–222 (LEIF…ILYF).

It belongs to the ATPase A chain family. As to quaternary structure, F-type ATPases have 2 components, CF(1) - the catalytic core - and CF(0) - the membrane proton channel. CF(1) has five subunits: alpha(3), beta(3), gamma(1), delta(1), epsilon(1). CF(0) has three main subunits: a, b and c.

The protein localises to the mitochondrion inner membrane. In terms of biological role, mitochondrial membrane ATP synthase (F(1)F(0) ATP synthase or Complex V) produces ATP from ADP in the presence of a proton gradient across the membrane which is generated by electron transport complexes of the respiratory chain. F-type ATPases consist of two structural domains, F(1) - containing the extramembraneous catalytic core and F(0) - containing the membrane proton channel, linked together by a central stalk and a peripheral stalk. During catalysis, ATP synthesis in the catalytic domain of F(1) is coupled via a rotary mechanism of the central stalk subunits to proton translocation. Key component of the proton channel; it may play a direct role in the translocation of protons across the membrane. The protein is ATP synthase subunit a (ATP6) of Apis mellifera ligustica (Common honeybee).